We begin with the raw amino-acid sequence, 255 residues long: Tablysin 15 (255 aa).

Positions 1-23 are cleaved as a signal peptide; the sequence is MTSIPVSSFLLAALVLQYATSDA. Intrachain disulfides connect Cys-27-Cys-40, Cys-31-Cys-117, and Cys-49-Cys-110. The short motif at 32–34 is the Cell attachment site element; that stretch reads RGD. The SCP domain maps to 67–211; the sequence is LSKINDVRDH…KARALLTCNF (145 aa). 3 residues coordinate leukotriene E4: Trp-82, His-153, and Lys-156. Disulfide bonds link Cys-192-Cys-209 and Cys-232-Cys-243.

This sequence belongs to the CRISP family. As to expression, expressed in salivary glands.

The protein localises to the secreted. Its function is as follows. Anti-inflammatory scavenger of eicosanoids and antithrombotic protein that inhibits platelets aggregation induced by collagen, ADP and convulxin (GPVI agonist). Exhibits high affinity binding for glycoprotein IIb-IIIa receptor (ITGA2B/ITGB3) and endothelial cell alphaVbeta3 (ITGAV/ITGB3) integrins, but not for alpha-5/beta-1 or alpha-2/beta-1. Accordingly, it blocks endothelial cell adhesion to vitronectin (IC(50)~1 nM) and marginally to fibronectin (IC(50)~1 uM), but not to collagen. It also inhibits fibroblast growth factor (FGF)-induced endothelial cell proliferation, and attenuates tube formation in vitro. In addition, it dose-dependently attenuates thrombus formation to collagen under flow. Also binds proinflammatory cysteinyl leukotrienes (leukotrienes C4 (LTC4), D4 (LTD4) and E4 (LTE4)) with submicromolar affinities. The protein is Tablysin 15 of Tabanus yao (Horsefly).